Reading from the N-terminus, the 228-residue chain is uncharacterized protein (228 aa).

A signal peptide spans 1 to 19 (MYRYTWLLWWITILLRIQQ). Asn-41, Asn-93, Asn-100, Asn-128, and Asn-164 each carry an N-linked (GlcNAc...) asparagine; by host glycan. Residues 189-209 (MWIIPLVIVTTIIVLICFKFP) traverse the membrane as a helical segment.

Belongs to the HHV-5 UL9 family.

The protein resides in the host membrane. This is an uncharacterized protein from Homo sapiens (Human).